Here is a 66-residue protein sequence, read N- to C-terminus: DNA-directed RNA polymerase subunit Rpo10 (66 aa).

Residues C7, C10, C44, and C45 each coordinate Zn(2+).

This sequence belongs to the archaeal Rpo10/eukaryotic RPB10 RNA polymerase subunit family. In terms of assembly, part of the RNA polymerase complex. The cofactor is Zn(2+).

It localises to the cytoplasm. It catalyses the reaction RNA(n) + a ribonucleoside 5'-triphosphate = RNA(n+1) + diphosphate. DNA-dependent RNA polymerase (RNAP) catalyzes the transcription of DNA into RNA using the four ribonucleoside triphosphates as substrates. The sequence is that of DNA-directed RNA polymerase subunit Rpo10 from Staphylothermus marinus (strain ATCC 43588 / DSM 3639 / JCM 9404 / F1).